Consider the following 271-residue polypeptide: Structure-specific endonuclease subunit SLX1 (271 aa).

In terms of domain architecture, GIY-YIG spans 9-94 (RFFGVYLLYC…PQASRRLTHV (86 aa)). An SLX1-type zinc finger spans residues 182–234 (CTLCARMLQDEEGPLCCPHPGCPLRAHIICLAEEFLQEEPGQLLPLEGHCPSC).

This sequence belongs to the SLX1 family. Forms a heterodimer with SLX4. It depends on a divalent metal cation as a cofactor.

The protein resides in the nucleus. In terms of biological role, catalytic subunit of the SLX1-SLX4 structure-specific endonuclease that resolves DNA secondary structures generated during DNA repair and recombination. Has endonuclease activity towards branched DNA substrates, introducing single-strand cuts in duplex DNA close to junctions with ss-DNA. Has a preference for 5'-flap structures, and promotes symmetrical cleavage of static and migrating Holliday junctions (HJs). Resolves HJs by generating two pairs of ligatable, nicked duplex products. In Rattus norvegicus (Rat), this protein is Structure-specific endonuclease subunit SLX1 (Slx1b).